We begin with the raw amino-acid sequence, 340 residues long: Phosphate acyltransferase (340 aa).

The protein belongs to the PlsX family. Homodimer. Probably interacts with PlsY.

The protein resides in the cytoplasm. It carries out the reaction a fatty acyl-[ACP] + phosphate = an acyl phosphate + holo-[ACP]. Its pathway is lipid metabolism; phospholipid metabolism. In terms of biological role, catalyzes the reversible formation of acyl-phosphate (acyl-PO(4)) from acyl-[acyl-carrier-protein] (acyl-ACP). This enzyme utilizes acyl-ACP as fatty acyl donor, but not acyl-CoA. This Pseudomonas savastanoi pv. phaseolicola (strain 1448A / Race 6) (Pseudomonas syringae pv. phaseolicola (strain 1448A / Race 6)) protein is Phosphate acyltransferase.